Here is a 1088-residue protein sequence, read N- to C-terminus: DEAD-box ATP-dependent RNA helicase 40 (1088 aa).

Disordered regions lie at residues 1 to 28 (MATT…PWKG), 47 to 178 (TQYE…QYAH), and 192 to 254 (TQGL…QNTH). An N-acetylalanine modification is found at Ala2. The region spanning 20 to 54 (PTLPQPWKGLIDGSTGILYYWNPETNVTQYERPSA) is the WW domain. Composition is skewed to low complexity over residues 87–137 (VGHV…SQSM), 148–171 (QTYQ…MPQQ), and 200–215 (QTPQ…PSQQ). The span at 222 to 231 (PKREGDEFHG) shows a compositional bias: basic and acidic residues. Residues 236–254 (GFSQPHLPNSERSPSQNTH) are compositionally biased toward polar residues. A Q motif motif is present at residues 435-463 (ITFESSGLPPEILRELLSAGFPSPTPIQA). The region spanning 466–640 (WPIALQSRDI…SDLLVNPVQV (175 aa)) is the Helicase ATP-binding domain. 479-486 (AKTGSGKT) is a binding site for ATP. The DEAD box signature appears at 588-591 (DEAD). Residues 669 to 813 (RLEQILRSQE…QVPPQVRDIA (145 aa)) form the Helicase C-terminal domain. Gly residues-rich tracts occupy residues 861 to 885 (EGGF…GGRF), 893 to 902 (GRGGNRGRGF), 911 to 920 (NVGGRGGFGR), and 932 to 944 (FGRG…GRGV). Positions 861 to 1033 (EGGFGGREGG…RRDRAPRVSG (173 aa)) are disordered. Residues 945–963 (GRFDNRRGRSRSRSPDLVR) show a composition bias toward basic and acidic residues. The segment covering 969-983 (SSYSRSRSRSGSYSR) has biased composition (low complexity). Residues 984 to 1013 (SRSRSRSWSRSRSRSPRHSRDRGGHNRSRS) show a composition bias toward basic residues.

This sequence belongs to the DEAD box helicase family. DDX5/DBP2 subfamily.

The protein resides in the nucleus. The catalysed reaction is ATP + H2O = ADP + phosphate + H(+). ATP-dependent RNA helicase involved nonsense-mediated mRNA decay and ribosome biogenesis through rRNA processing. This Arabidopsis thaliana (Mouse-ear cress) protein is DEAD-box ATP-dependent RNA helicase 40 (RH40).